We begin with the raw amino-acid sequence, 647 residues long: 5-aminolevulinate synthase, non-specific, mitochondrial (647 aa).

The N-terminal 56 residues, 1–56 (METVVRRCPFLSRVPQAFLQKAGKSLLFYAQNCPKMMEIGAKPAPRALSTSAVLCQ), are a transit peptide targeting the mitochondrion. The tract at residues 61–112 (TPPANEKDKAAKAEVQQAPDGSQQAPDGSQQTADGTQLPSGHPSLASSQGTG) is disordered. The segment covering 79–112 (PDGSQQAPDGSQQTADGTQLPSGHPSLASSQGTG) has biased composition (polar residues). Substrate-binding residues include Arg-224, Ser-341, and Lys-360. Ser-393, His-421, and Thr-449 together coordinate pyridoxal 5'-phosphate. The active site involves Lys-452. Lys-452 carries the post-translational modification N6-(pyridoxal phosphate)lysine. Residues Thr-481 and Thr-482 each coordinate pyridoxal 5'-phosphate. Thr-569 is a binding site for substrate. At Pro-583 the chain carries Hydroxyproline.

It belongs to the class-II pyridoxal-phosphate-dependent aminotransferase family. Homodimer. Interacts (hydroxylated form) with VHL. Requires pyridoxal 5'-phosphate as cofactor. In normoxia, is hydroxylated at Pro-583, promoting interaction with VHL, initiating ubiquitination and subsequent degradation via the proteasome. In terms of processing, ubiquitinated; in normoxia following hydroxylation and interaction with VHL, leading to its subsequent degradation via the proteasome.

Its subcellular location is the mitochondrion inner membrane. It catalyses the reaction succinyl-CoA + glycine + H(+) = 5-aminolevulinate + CO2 + CoA. It functions in the pathway porphyrin-containing compound metabolism; protoporphyrin-IX biosynthesis; 5-aminolevulinate from glycine: step 1/1. Catalyzes the pyridoxal 5'-phosphate (PLP)-dependent condensation of succinyl-CoA and glycine to form aminolevulinic acid (ALA), with CoA and CO2 as by-products. The sequence is that of 5-aminolevulinate synthase, non-specific, mitochondrial (ALAS1) from Bos taurus (Bovine).